The following is a 311-amino-acid chain: HPr kinase/phosphorylase (311 aa).

Active-site residues include His138 and Lys159. 153–160 (GDSGIGKS) serves as a coordination point for ATP. Ser160 provides a ligand contact to Mg(2+). Asp177 functions as the Proton acceptor; for phosphorylation activity. Proton donor; for dephosphorylation activity in the catalytic mechanism. The segment at 201 to 210 (LEIRGVGIID) is important for the catalytic mechanism of both phosphorylation and dephosphorylation. Residue Glu202 coordinates Mg(2+). The active site involves Arg243. The important for the catalytic mechanism of dephosphorylation stretch occupies residues 264 to 269 (PVKTGR).

The protein belongs to the HPrK/P family. As to quaternary structure, homohexamer. It depends on Mg(2+) as a cofactor.

It catalyses the reaction [HPr protein]-L-serine + ATP = [HPr protein]-O-phospho-L-serine + ADP + H(+). The catalysed reaction is [HPr protein]-O-phospho-L-serine + phosphate + H(+) = [HPr protein]-L-serine + diphosphate. Functionally, catalyzes the ATP- as well as the pyrophosphate-dependent phosphorylation of a specific serine residue in HPr, a phosphocarrier protein of the phosphoenolpyruvate-dependent sugar phosphotransferase system (PTS). HprK/P also catalyzes the pyrophosphate-producing, inorganic phosphate-dependent dephosphorylation (phosphorolysis) of seryl-phosphorylated HPr (P-Ser-HPr). The two antagonistic activities of HprK/P are regulated by several intracellular metabolites, which change their concentration in response to the absence or presence of rapidly metabolisable carbon sources (glucose, fructose, etc.) in the growth medium. Therefore, by controlling the phosphorylation state of HPr, HPrK/P is a sensor enzyme that plays a major role in the regulation of carbon metabolism and sugar transport: it mediates carbon catabolite repression (CCR), and regulates PTS-catalyzed carbohydrate uptake and inducer exclusion. This chain is HPr kinase/phosphorylase, found in Streptococcus sanguinis (strain SK36).